Consider the following 62-residue polypeptide: Protein P14 (62 aa).

Its function is as follows. Needed for optimal phage development. In Pseudomonas savastanoi pv. phaseolicola (Pseudomonas syringae pv. phaseolicola), this protein is Protein P14 (P14).